A 90-amino-acid chain; its full sequence is Small ribosomal subunit protein bS16 (90 aa).

It belongs to the bacterial ribosomal protein bS16 family.

This chain is Small ribosomal subunit protein bS16, found in Streptococcus pyogenes serotype M4 (strain MGAS10750).